The sequence spans 338 residues: Anthranilate phosphoribosyltransferase (338 aa).

5-phospho-alpha-D-ribose 1-diphosphate contacts are provided by residues glycine 81, 84–85 (GD), threonine 89, 91–94 (NVST), 109–117 (KHGNRALSS), and alanine 121. Position 81 (glycine 81) interacts with anthranilate. Serine 93 is a Mg(2+) binding site. Position 112 (asparagine 112) interacts with anthranilate. Position 167 (arginine 167) interacts with anthranilate. Mg(2+) is bound by residues aspartate 225 and glutamate 226.

This sequence belongs to the anthranilate phosphoribosyltransferase family. In terms of assembly, homodimer. It depends on Mg(2+) as a cofactor.

The enzyme catalyses N-(5-phospho-beta-D-ribosyl)anthranilate + diphosphate = 5-phospho-alpha-D-ribose 1-diphosphate + anthranilate. The protein operates within amino-acid biosynthesis; L-tryptophan biosynthesis; L-tryptophan from chorismate: step 2/5. In terms of biological role, catalyzes the transfer of the phosphoribosyl group of 5-phosphorylribose-1-pyrophosphate (PRPP) to anthranilate to yield N-(5'-phosphoribosyl)-anthranilate (PRA). The chain is Anthranilate phosphoribosyltransferase from Chelativorans sp. (strain BNC1).